Consider the following 801-residue polypeptide: Heavy metal tolerance factor 1 (801 aa).

Residues 1-24 (MGFSPFLDECRAEGLWPIGPSCNK) lie on the Lumenal side of the membrane. Residues 25–45 (IISFGVYTFFIVVNFIVLCIP) form a helical membrane-spanning segment. At 46-75 (NSNSANNNYRRMTDDDASSTSKLTISKILS) the chain is on the cytoplasmic side. Residues 76–96 (ICTIFAVICQSIFYFCFTFYF) form a helical membrane-spanning segment. Topologically, residues 97–101 (HPYTH) are lumenal. The chain crosses the membrane as a helical span at residues 102–122 (LLLAFCVSKLFFWILSLCSFS). Over 123–129 (KWRNQPS) the chain is Cytoplasmic. A helical transmembrane segment spans residues 130-150 (TPISLAFAFSAALLIHCIPLT). Over 151–167 (DWKKYFEPTSKNRGDLT) the chain is Lumenal. The chain crosses the membrane as a helical span at residues 168 to 188 (FYIIELALVTVVFFFTIVTGL). At 189–226 (FNFSGCSSRESAWNNLSKKVVTVAPYIWPTKSISLQLR) the chain is on the cytoplasmic side. A helical transmembrane segment spans residues 227–247 (VVFCLFLLIIGRLINVSLPIL). The ABC transmembrane type-1 domain maps to 227–516 (VVFCLFLLII…FGTIYRVIQK (290 aa)). The Lumenal segment spans residues 248–264 (SKWIVDELATPDTFQYS). The helical transmembrane segment at 265 to 285 (LLFLATFLKFLQGNGAMGGFL) threads the bilayer. Topologically, residues 286–341 (NTVRTYLWIPIQQYTTRELEVELFKHLHSLSLRWHLSRKTGQVLRVMDRGTSSVNN) are cytoplasmic. A helical membrane pass occupies residues 342–364 (ILNYILFNVVPTIADIVIAVIFF). The Lumenal segment spans residues 365 to 371 (FSAFNAY). A helical membrane pass occupies residues 372–390 (FGLIVFGTMALYLTVTISI). Residues 391–461 (TEWRTQYIRE…SLAFLNCLQN (71 aa)) are Cytoplasmic-facing. The helical transmembrane segment at 462–482 (AIIGIGMIGGSVFVVYMIVHE) threads the bilayer. The Lumenal portion of the chain corresponds to 483-489 (KTLTVGD). The helical transmembrane segment at 490–510 (YVLFTTYLLQLYTPLNFFGTI) threads the bilayer. Topologically, residues 511–801 (YRVIQKAFVD…KSIELGEELP (291 aa)) are cytoplasmic. The 235-residue stretch at 550–784 (ISVKNLTFEY…QGTYASMWEA (235 aa)) folds into the ABC transporter domain. 583–590 (GSSGSGKS) contacts ATP.

Belongs to the ABC transporter superfamily. ABCB family. Heavy Metal importer (TC 3.A.1.210) subfamily. In terms of tissue distribution, expressed in coelomocytes, as well as in head and tail neurons, and in the intestinal cells.

It localises to the vacuole membrane. The protein resides in the early endosome. The protein localises to the late endosome. It is found in the recycling endosome. Its function is as follows. May play a pivotal role in the detoxification of heavy metals such as cadmium but do not depend exclusively on phytochelatins (PC) synthesis. This chain is Heavy metal tolerance factor 1, found in Caenorhabditis elegans.